Here is a 150-residue protein sequence, read N- to C-terminus: Globin-5 (150 aa).

Positions 11–150 constitute a Globin domain; it reads PLSAAEKTKI…MICILLRSAY (140 aa). Heme b-binding residues include His-74 and His-106.

This sequence belongs to the globin family. In terms of assembly, monomer at high oxygen tension and high pH and dimeric at low oxygen tension and lower pH.

The protein is Globin-5 of Petromyzon marinus (Sea lamprey).